The sequence spans 515 residues: Lysosomal acid glucosylceramidase (515 aa).

A signal peptide spans 1-19 (MAARLIGFFLFQAVSWAYG). Cystine bridges form between cysteine 23–cysteine 35 and cysteine 37–cysteine 42. N-linked (GlcNAc...) asparagine glycans are attached at residues asparagine 38 and asparagine 78. Asparagine 165 is a glycosylation site (N-linked (GlcNAc...) (high mannose) asparagine). Residue glutamate 254 is the Proton donor of the active site. Asparagine 289 is a glycosylation site (N-linked (GlcNAc...) asparagine). Glutamate 358 (nucleophile) is an active-site residue. Asparagine 480 carries an N-linked (GlcNAc...) asparagine glycan.

Belongs to the glycosyl hydrolase 30 family. Interacts with saposin-C. Interacts with SCARB2. Interacts with TCP1. Interacts with GRN; this interaction prevents aggregation of GBA1-SCARB2 complex via interaction with HSPA1A upon stress.

Its subcellular location is the lysosome membrane. The catalysed reaction is a beta-D-glucosyl-(1&lt;-&gt;1')-N-acylsphing-4-enine + H2O = an N-acylsphing-4-enine + D-glucose. It catalyses the reaction a beta-D-galactosyl-(1&lt;-&gt;1')-N-acylsphing-4-enine + H2O = an N-acylsphing-4-enine + D-galactose. It carries out the reaction cholesteryl 3-beta-D-glucoside + H2O = cholesterol + D-glucose. The enzyme catalyses a beta-D-glucosyl-(1&lt;-&gt;1')-N-acylsphing-4-enine + cholesterol = cholesteryl 3-beta-D-glucoside + an N-acylsphing-4-enine. The catalysed reaction is beta-D-glucosyl-(1&lt;-&gt;1')-N-hexadecanoylsphing-4-enine + cholesterol = cholesteryl 3-beta-D-glucoside + N-hexadecanoylsphing-4-enine. It catalyses the reaction beta-D-glucosyl-N-(9Z-octadecenoyl)-sphing-4E-enine + cholesterol = N-(9Z-octadecenoyl)-sphing-4-enine + cholesteryl 3-beta-D-glucoside. It carries out the reaction beta-D-glucosyl-N-octanoylsphing-4E-enine + cholesterol = N-octanoylsphing-4-enine + cholesteryl 3-beta-D-glucoside. The enzyme catalyses beta-D-glucosyl-N-dodecanoylsphing-4-enine + cholesterol = N-dodecanoylsphing-4-enine + cholesteryl 3-beta-D-glucoside. The catalysed reaction is beta-D-glucosyl-(1&lt;-&gt;1)-N-octadecanoylsphing-4-enine + cholesterol = N-octadecanoylsphing-4-enine + cholesteryl 3-beta-D-glucoside. It catalyses the reaction beta-D-glucosyl-(1&lt;-&gt;1')-N-(15Z-tetracosenoyl)-sphing-4-enine + cholesterol = N-(15Z-tetracosenoyl)-sphing-4-enine + cholesteryl 3-beta-D-glucoside. It carries out the reaction a beta-D-galactosyl-(1&lt;-&gt;1')-N-acylsphing-4-enine + cholesterol = cholesteryl 3-beta-D-galactoside + an N-acylsphing-4-enine. The enzyme catalyses 1-(beta-D-galactosyl)-N-dodecanoylsphing-4-enine + cholesterol = cholesteryl 3-beta-D-galactoside + N-dodecanoylsphing-4-enine. The catalysed reaction is a beta-D-xylosyl-(1&lt;-&gt;1')-N-acylsphing-4-enine + cholesterol = cholesteryl 3-beta-D-xyloside + an N-acylsphing-4-enine. It catalyses the reaction beta-D-xylosyl-(1&lt;-&gt;1')-N-(9Z-octadecenoyl)-sphing-4-enine + cholesterol = cholesteryl 3-beta-D-xyloside + N-(9Z-octadecenoyl)-sphing-4-enine. It participates in steroid metabolism; cholesterol metabolism. The protein operates within sphingolipid metabolism. Inhibited by conduritol B epoxide/CBE. Functionally, glucosylceramidase that catalyzes, within the lysosomal compartment, the hydrolysis of glucosylceramides/GlcCers (such as beta-D-glucosyl-(1&lt;-&gt;1')-N-acylsphing-4-enine) into free ceramides (such as N-acylsphing-4-enine) and glucose. Plays a central role in the degradation of complex lipids and the turnover of cellular membranes. Through the production of ceramides, participates in the PKC-activated salvage pathway of ceramide formation. Catalyzes the glucosylation of cholesterol, through a transglucosylation reaction where glucose is transferred from GlcCer to cholesterol. GlcCer containing mono-unsaturated fatty acids (such as beta-D-glucosyl-N-(9Z-octadecenoyl)-sphing-4-enine) are preferred as glucose donors for cholesterol glucosylation when compared with GlcCer containing same chain length of saturated fatty acids (such as beta-D-glucosyl-N-octadecanoyl-sphing-4-enine). Under specific conditions, may alternatively catalyze the reverse reaction, transferring glucose from cholesteryl 3-beta-D-glucoside to ceramide. Can also hydrolyze cholesteryl 3-beta-D-glucoside producing glucose and cholesterol. Catalyzes the hydrolysis of galactosylceramides/GalCers (such as beta-D-galactosyl-(1&lt;-&gt;1')-N-acylsphing-4-enine), as well as the transfer of galactose between GalCers and cholesterol in vitro, but with lower activity than with GlcCers. Contrary to GlcCer and GalCer, xylosylceramide/XylCer (such as beta-D-xyosyl-(1&lt;-&gt;1')-N-acylsphing-4-enine) is not a good substrate for hydrolysis, however it is a good xylose donor for transxylosylation activity to form cholesteryl 3-beta-D-xyloside. This chain is Lysosomal acid glucosylceramidase (Gba1), found in Mus musculus (Mouse).